Consider the following 165-residue polypeptide: Nucleotide-binding protein LBF_1338 (165 aa).

This sequence belongs to the YajQ family.

Its function is as follows. Nucleotide-binding protein. The polypeptide is Nucleotide-binding protein LBF_1338 (Leptospira biflexa serovar Patoc (strain Patoc 1 / Ames)).